A 296-amino-acid polypeptide reads, in one-letter code: Zinc finger protein 75A (296 aa).

The 66-residue stretch at 1 to 66 folds into the KRAB domain; that stretch reads MYFSQEEWEL…VSPEFKDSAG (66 aa). 5 consecutive C2H2-type zinc fingers follow at residues 161–183, 189–211, 217–239, 245–267, and 273–295; these read FKCQ…QRIH, YKCQ…LTTH, YKCS…QRTH, FTCH…RRTH, and YTCS…QKLH.

This sequence belongs to the krueppel C2H2-type zinc-finger protein family.

The protein localises to the nucleus. Its function is as follows. May be involved in transcriptional regulation. This is Zinc finger protein 75A (ZNF75A) from Homo sapiens (Human).